We begin with the raw amino-acid sequence, 41 residues long: Photosystem I reaction center subunit IX (41 aa).

Residues 7-27 (YLSTVPVVFAIWLTFTAGLII) form a helical membrane-spanning segment.

Belongs to the PsaJ family.

It localises to the plastid. The protein resides in the chloroplast thylakoid membrane. Functionally, may help in the organization of the PsaE and PsaF subunits. The protein is Photosystem I reaction center subunit IX of Bigelowiella natans (Pedinomonas minutissima).